Consider the following 110-residue polypeptide: Lichenan-specific phosphotransferase enzyme IIA component (110 aa).

The PTS EIIA type-3 domain maps to E3–K101. H77 functions as the Tele-phosphohistidine intermediate; by HPr in the catalytic mechanism.

It localises to the cytoplasm. Its function is as follows. The phosphoenolpyruvate-dependent sugar phosphotransferase system (PTS), a major carbohydrate active -transport system, catalyzes the phosphorylation of incoming sugar substrates concomitant with their translocation across the cell membrane. This system is involved in lichenan transport. The protein is Lichenan-specific phosphotransferase enzyme IIA component (licA) of Bacillus subtilis (strain 168).